The chain runs to 1392 residues: ATP-dependent helicase/nuclease subunit A (1392 aa).

A UvrD-like helicase ATP-binding domain is found at 3-489 (NPKWTPAQQA…IDLNQNFRSR (487 aa)). 24-31 (AAAGSGKT) is an ATP binding site. 3 disordered regions span residues 291–319 (RGSK…KARD), 555–594 (KRGA…LEEA), and 1051–1126 (GPVQ…LDTK). Composition is skewed to basic and acidic residues over residues 305 to 319 (ENSK…KARD) and 567 to 583 (SPAK…REPE). Residues 556-886 (RGAEDAATEV…RFITVHSSKG (331 aa)) form the UvrD-like helicase C-terminal domain. Residues 584–594 (SGDDESSLEEA) show a composition bias toward acidic residues. Residues 1088-1113 (ASGKTEIPGETKNSEETKTSEDKKNL) show a composition bias toward basic and acidic residues.

The protein belongs to the helicase family. AddA subfamily. Heterodimer of AddA and AddB/RexB. Requires Mg(2+) as cofactor.

It catalyses the reaction Couples ATP hydrolysis with the unwinding of duplex DNA by translocating in the 3'-5' direction.. The catalysed reaction is ATP + H2O = ADP + phosphate + H(+). Functionally, the heterodimer acts as both an ATP-dependent DNA helicase and an ATP-dependent, dual-direction single-stranded exonuclease. Recognizes the chi site generating a DNA molecule suitable for the initiation of homologous recombination. The AddA nuclease domain is required for chi fragment generation; this subunit has the helicase and 3' -&gt; 5' nuclease activities. The protein is ATP-dependent helicase/nuclease subunit A of Desulfitobacterium hafniense (strain DSM 10664 / DCB-2).